A 399-amino-acid polypeptide reads, in one-letter code: MAKEKYERTKPHVNIGTIGHVDHGKTTLTAAISKVLHDEYPDLNPEYDFNQIDAAPEEQQRGITINIAHIEYQTAKRHYAHVDCPGHADFVKNMITGAAQMDGAILVVAATDGPMAQTREHVLLAPQVGVPKILVALNKCDMVDDEELIELVEEEVRDLLDENGFDRDCPVVHTSAYGALHDDAPDHDKWVATIKELMDDVDEYIPTPVHDLDKPFLMPIEDVFTISGRGTVVTGRVERGKLPINTNVEIVGIRPTQTTTFTSIETFHKQMDECEAGDNTGLLLRGINRTDVERGQVVAAPGSVTPHTKFEGEVYVLTKDEGGRHSPFFSNYRPQFYFRTTDVTGVITLPEGVEMVQPGDHATFTVELIQPIAMEEGLTFAVREGGHTVGSGRVTKILA.

Positions 10-209 constitute a tr-type G domain; sequence KPHVNIGTIG…DVDEYIPTPV (200 aa). Residues 19-26 are G1; that stretch reads GHVDHGKT. 19–26 contributes to the GTP binding site; that stretch reads GHVDHGKT. T26 contacts Mg(2+). Residues 62 to 66 form a G2 region; the sequence is GITIN. The segment at 83–86 is G3; the sequence is DCPG. GTP-binding positions include 83-87 and 138-141; these read DCPGH and NKCD. Residues 138 to 141 are G4; the sequence is NKCD. Residues 175-177 form a G5 region; that stretch reads SAY.

Belongs to the TRAFAC class translation factor GTPase superfamily. Classic translation factor GTPase family. EF-Tu/EF-1A subfamily. As to quaternary structure, monomer.

The protein resides in the cytoplasm. It catalyses the reaction GTP + H2O = GDP + phosphate + H(+). In terms of biological role, GTP hydrolase that promotes the GTP-dependent binding of aminoacyl-tRNA to the A-site of ribosomes during protein biosynthesis. The polypeptide is Elongation factor Tu (Bifidobacterium animalis subsp. lactis (strain AD011)).